We begin with the raw amino-acid sequence, 371 residues long: Histidinol-phosphate aminotransferase (371 aa).

Lys-228 bears the N6-(pyridoxal phosphate)lysine mark.

The protein belongs to the class-II pyridoxal-phosphate-dependent aminotransferase family. Histidinol-phosphate aminotransferase subfamily. Pyridoxal 5'-phosphate is required as a cofactor.

The catalysed reaction is L-histidinol phosphate + 2-oxoglutarate = 3-(imidazol-4-yl)-2-oxopropyl phosphate + L-glutamate. Its pathway is amino-acid biosynthesis; L-histidine biosynthesis; L-histidine from 5-phospho-alpha-D-ribose 1-diphosphate: step 7/9. The protein is Histidinol-phosphate aminotransferase of Methanococcus aeolicus (strain ATCC BAA-1280 / DSM 17508 / OCM 812 / Nankai-3).